The following is a 316-amino-acid chain: Small ribosomal subunit protein RACK1 (316 aa).

7 WD repeats span residues 4–46 (QMTL…WRLT), 52–93 (YGVP…WDLS), 94–135 (TGQT…WNTL), 137–180 (VCKY…WNLT), 181–221 (NCKL…LWDL), 222–263 (NEGK…WDLE), and 264–312 (GKVV…WQVS).

The protein belongs to the WD repeat G protein beta family. Ribosomal protein RACK1 subfamily.

The polypeptide is Small ribosomal subunit protein RACK1 (Biomphalaria glabrata (Bloodfluke planorb)).